The following is a 208-amino-acid chain: Large ribosomal subunit protein uL3 (208 aa).

Residues 124 to 146 (HGQSRGPMAHGSRYHRRPGSMGP) form a disordered region.

Belongs to the universal ribosomal protein uL3 family. As to quaternary structure, part of the 50S ribosomal subunit. Forms a cluster with proteins L14 and L19.

One of the primary rRNA binding proteins, it binds directly near the 3'-end of the 23S rRNA, where it nucleates assembly of the 50S subunit. This Streptococcus thermophilus (strain ATCC BAA-491 / LMD-9) protein is Large ribosomal subunit protein uL3.